Here is a 209-residue protein sequence, read N- to C-terminus: MSTGLQLLGTTLGTLGWLGIIISCAIPLWRVTAFIGNNIVTAQTMWEGLWMSCVVQSTGQMQCKVYDSMLALAQDLQASRAILVISAIVGLIAMFASFAGGKCTNCLADNSAKALVATTGGVAFIIAGILGLVPPSWTANTIIRDFYNPLVAEAQKREFGAAIFICWGAAVLLVIGGGLLCSSYPKGRTSSRGRYTPASQNGRERSEYV.

4 consecutive transmembrane segments (helical) span residues 8–28, 81–101, 114–134, and 159–179; these read LGTT…AIPL, AILV…FAGG, ALVA…GLVP, and FGAA…GGGL. The disordered stretch occupies residues 187-209; that stretch reads GRTSSRGRYTPASQNGRERSEYV. A compositionally biased stretch (polar residues) spans 188-201; that stretch reads RTSSRGRYTPASQN.

Belongs to the claudin family.

Its subcellular location is the cell membrane. The protein resides in the cell junction. It localises to the tight junction. Component of tight junction (TJ) strands. This is Claudin-like protein ZF-A9 (cldng) from Danio rerio (Zebrafish).